Reading from the N-terminus, the 233-residue chain is Large ribosomal subunit protein uL1 (233 aa).

Belongs to the universal ribosomal protein uL1 family. Part of the 50S ribosomal subunit.

Functionally, binds directly to 23S rRNA. The L1 stalk is quite mobile in the ribosome, and is involved in E site tRNA release. Its function is as follows. Protein L1 is also a translational repressor protein, it controls the translation of the L11 operon by binding to its mRNA. The chain is Large ribosomal subunit protein uL1 from Shewanella amazonensis (strain ATCC BAA-1098 / SB2B).